We begin with the raw amino-acid sequence, 499 residues long: MLERATRTIKTAGLLLAAYFVLNIVLRIVLPHSLELDEAEQSFFSQYLLAGYGPQPPFYNWMQYAVVSVTGISIGALIVPKNILLFLSYLFYGLAGRRVLKDEALAAVGMLALITLPQVSYMAQQDLTHTTALLFASSLFLYGFFRTLDRPDMASYLLLGLATGIGLISKYNFALMPVVALIAILPDAEWRRRALDWRMLAAITVALVIVLPHAVWLQGNLAFASSDTLVKMAAGSEPAGAVRIGKGLLAFLVAIIAFAALPVVIFAATFRRDFVRALSAGNRWTGMMERMMLASLAGIALIVLFTGSTTVRERWLDPFLLVLPIYFLAKMQAAGLDLSAGLRRFRPVLPVLMACVLIALGFRVVGAGLIGTYSRPNVPMAGFAREMTRQAEPALVIASDTYIGGNMRLQFPDVPVVIPDFPAPGIPAYAEAKGPVLIVWRGKKTATAADAVMPERFSSALTAAGIALQEIGSLSLPYYFGRQGDNFALGYAWVRPETR.

10 helical membrane passes run 11–31 (TAGL…IVLP), 74–94 (IGAL…FYGL), 103–123 (EALA…SYMA), 125–145 (QDLT…YGFF), 165–185 (IGLI…IAIL), 199–219 (MLAA…WLQG), 248–268 (LLAF…IFAA), 291–311 (MMLA…STTV), 316–336 (LDPF…AAGL), and 351–371 (VLMA…GLIG).

This sequence belongs to the glycosyltransferase 83 family.

It is found in the cell inner membrane. It functions in the pathway bacterial outer membrane biogenesis; LPS core biosynthesis. Its function is as follows. Involved in the modification of the lipopolysaccharide (LPS) inner core. Catalyzes the transfer of a galacturonic acid (GalA) residue to the 4-position of the outer Kdo (3-deoxy-D-manno-octulosonic acid) residue of the LPS inner core, using dodecaprenyl phosphate-GalA as the donor substrate. GalA addition by RgtA is required for RgtB activity. The protein is Lipopolysaccharide core galacturonosyltransferase RgtA of Rhizobium johnstonii (strain DSM 114642 / LMG 32736 / 3841) (Rhizobium leguminosarum bv. viciae).